A 142-amino-acid polypeptide reads, in one-letter code: Holo-[acyl-carrier-protein] synthase (142 aa).

Positions 8 and 57 each coordinate Mg(2+).

It belongs to the P-Pant transferase superfamily. AcpS family. It depends on Mg(2+) as a cofactor.

Its subcellular location is the cytoplasm. It carries out the reaction apo-[ACP] + CoA = holo-[ACP] + adenosine 3',5'-bisphosphate + H(+). Transfers the 4'-phosphopantetheine moiety from coenzyme A to a Ser of acyl-carrier-protein. This Maricaulis maris (strain MCS10) (Caulobacter maris) protein is Holo-[acyl-carrier-protein] synthase.